The chain runs to 483 residues: SWI/SNF-related matrix-associated actin-dependent regulator of chromatin subfamily D member 3 (483 aa).

At Ala2 the chain carries N-acetylalanine. The disordered stretch occupies residues Arg27–Lys102. Residues Gln78–Val88 show a composition bias toward low complexity. Residue Ser178 is modified to Phosphoserine. The SWIB/MDM2 domain occupies Tyr258 to Pro335.

It belongs to the SMARCD family. As to quaternary structure, component of the multiprotein chromatin-remodeling complexes SWI/SNF: SWI/SNF-A (BAF), SWI/SNF-B (PBAF) and related complexes. The canonical complex contains a catalytic subunit (either SMARCA4/BRG1/BAF190A or SMARCA2/BRM/BAF190B) and at least SMARCE1, ACTL6A/BAF53, SMARCC1/BAF155, SMARCC2/BAF170, and SMARCB1/SNF5/BAF47. Other subunits specific to each of the complexes may also be present permitting several possible combinations developmentally and tissue specific. Component of the BAF complex, which includes at least actin (ACTB), ARID1A/BAF250A, ARID1B/BAF250B, SMARCA2/BRM, SMARCA4/BRG1/BAF190A, ACTL6A/BAF53, ACTL6B/BAF53B, SMARCE1/BAF57, SMARCC1/BAF155, SMARCC2/BAF170, SMARCB1/SNF5/INI1, and one or more SMARCD1/BAF60A, SMARCD2/BAF60B, or SMARCD3/BAF60C. In muscle cells, the BAF complex also contains DPF3. Component of neural progenitors-specific chromatin remodeling complex (npBAF complex) composed of at least, ARID1A/BAF250A or ARID1B/BAF250B, SMARCD1/BAF60A, SMARCD3/BAF60C, SMARCA2/BRM/BAF190B, SMARCA4/BRG1/BAF190A, SMARCB1/BAF47, SMARCC1/BAF155, SMARCE1/BAF57, SMARCC2/BAF170, PHF10/BAF45A, ACTL6A/BAF53A and actin. Component of neuron-specific chromatin remodeling complex (nBAF complex) composed of at least, ARID1A/BAF250A or ARID1B/BAF250B, SMARCD1/BAF60A, SMARCD3/BAF60C, SMARCA2/BRM/BAF190B, SMARCA4/BRG1/BAF190A, SMARCB1/BAF47, SMARCC1/BAF155, SMARCE1/BAF57, SMARCC2/BAF170, DPF1/BAF45B, DPF3/BAF45C, ACTL6B/BAF53B and actin. May be a component of the SWI/SNF-B (PBAF) chromatin remodeling complex, at least composed of SMARCA4/BRG1, SMARCB1/BAF47/SNF5, ACTL6A/BAF53A or ACTL6B/BAF53B, SMARCE1/BAF57, SMARCD1/BAF60A, SMARCD2/BAF60B, perhaps SMARCD3/BAF60C, SMARCC1/BAF155, SMARCC2/BAF170, PBRM1/BAF180, ARID2/BAF200 and actin. Component of SWI/SNF (GBAF) subcomplex, which includes at least BICRA or BICRAL (mutually exclusive), BRD9, SS18, SMARCA2/BRM, SMARCA4/BRG1/BAF190A, ACTL6A/BAF53, SMARCC1/BAF155, and SMARCD1/BAF60A. Interacts with SMARCA4/BRG1/BAF190A. The precise distribution of the related SMARCD1, SMARCD2 and SMARCD3 proteins among these and other SWI/SNF nucleosome-remodeling complexes is not fully known. May allow recruitment of SWI/SNF containing complexes specifically to promoters where these factors are located. Also interacts with several nuclear receptors including PPARG/NR1C3, RXRA/NR1F1, ESR1, NR5A1, NR5A2/LRH1 and other transcriptional activators including the HLH protein SREBF1/SREBP1 and the homeobox protein PBX1. Interacts with PRDM1/BLIMP1. Ubiquitously expressed.

It localises to the nucleus. In terms of biological role, involved in transcriptional activation and repression of select genes by chromatin remodeling (alteration of DNA-nucleosome topology). Component of SWI/SNF chromatin remodeling complexes that carry out key enzymatic activities, changing chromatin structure by altering DNA-histone contacts within a nucleosome in an ATP-dependent manner. Stimulates nuclear receptor mediated transcription. Belongs to the neural progenitors-specific chromatin remodeling complex (npBAF complex) and the neuron-specific chromatin remodeling complex (nBAF complex). During neural development a switch from a stem/progenitor to a postmitotic chromatin remodeling mechanism occurs as neurons exit the cell cycle and become committed to their adult state. The transition from proliferating neural stem/progenitor cells to postmitotic neurons requires a switch in subunit composition of the npBAF and nBAF complexes. As neural progenitors exit mitosis and differentiate into neurons, npBAF complexes which contain ACTL6A/BAF53A and PHF10/BAF45A, are exchanged for homologous alternative ACTL6B/BAF53B and DPF1/BAF45B or DPF3/BAF45C subunits in neuron-specific complexes (nBAF). The npBAF complex is essential for the self-renewal/proliferative capacity of the multipotent neural stem cells. The nBAF complex along with CREST plays a role regulating the activity of genes essential for dendrite growth. The protein is SWI/SNF-related matrix-associated actin-dependent regulator of chromatin subfamily D member 3 (Smarcd3) of Mus musculus (Mouse).